A 445-amino-acid polypeptide reads, in one-letter code: Phosphoglucosamine mutase (445 aa).

Ser-102 functions as the Phosphoserine intermediate in the catalytic mechanism. The Mg(2+) site is built by Ser-102, Asp-241, Asp-243, and Asp-245. Ser-102 carries the post-translational modification Phosphoserine.

The protein belongs to the phosphohexose mutase family. Mg(2+) is required as a cofactor. Activated by phosphorylation.

The catalysed reaction is alpha-D-glucosamine 1-phosphate = D-glucosamine 6-phosphate. Catalyzes the conversion of glucosamine-6-phosphate to glucosamine-1-phosphate. The sequence is that of Phosphoglucosamine mutase from Photorhabdus laumondii subsp. laumondii (strain DSM 15139 / CIP 105565 / TT01) (Photorhabdus luminescens subsp. laumondii).